A 299-amino-acid chain; its full sequence is GTPase Era (299 aa).

Positions lysine 5–glutamate 172 constitute an Era-type G domain. Positions glycine 13–serine 20 are G1. Glycine 13–serine 20 lines the GTP pocket. A G2 region spans residues glutamine 39–asparagine 43. Positions aspartate 60–glycine 63 are G3. Residues aspartate 60–isoleucine 64 and asparagine 122–aspartate 125 each bind GTP. A G4 region spans residues asparagine 122–aspartate 125. The interval isoleucine 151 to alanine 153 is G5. The region spanning threonine 203–arginine 280 is the KH type-2 domain.

This sequence belongs to the TRAFAC class TrmE-Era-EngA-EngB-Septin-like GTPase superfamily. Era GTPase family. In terms of assembly, monomer.

It localises to the cytoplasm. It is found in the cell membrane. In terms of biological role, an essential GTPase that binds both GDP and GTP, with rapid nucleotide exchange. Plays a role in 16S rRNA processing and 30S ribosomal subunit biogenesis and possibly also in cell cycle regulation and energy metabolism. The chain is GTPase Era from Staphylococcus epidermidis (strain ATCC 35984 / DSM 28319 / BCRC 17069 / CCUG 31568 / BM 3577 / RP62A).